The chain runs to 352 residues: Protein RecA (352 aa).

68–75 lines the ATP pocket; it reads GPESSGKT.

The protein belongs to the RecA family.

It is found in the cytoplasm. In terms of biological role, can catalyze the hydrolysis of ATP in the presence of single-stranded DNA, the ATP-dependent uptake of single-stranded DNA by duplex DNA, and the ATP-dependent hybridization of homologous single-stranded DNAs. It interacts with LexA causing its activation and leading to its autocatalytic cleavage. The polypeptide is Protein RecA (Clostridium perfringens (strain ATCC 13124 / DSM 756 / JCM 1290 / NCIMB 6125 / NCTC 8237 / Type A)).